The primary structure comprises 312 residues: MNEEVEDGEVKPLELSSEDKAILVETLKNKLQALAEQHVDVLESLAPSVRKRVDVLMEIQSQHDELEVKFFEEKAALEAKYQKLYGPLYSKRSKIVSGVLEVEGETEEREEKGVPDFWLNAMKNNEILAEEIHESDEEALKYLKDIKWCRIDDPKGFKFEFFFYTNPFFKNQVLTKTYHMIDEDDEPILEKAIGTEIEWHPGYCLTQEVLTKESSESTKPITKTEECESFFNFFSPPQVPDDDAKIDENTAEELQNQMERDYDIASTLRDKIIPHAVSWFTREAVQDEDYGASWVDDEEEDDNDDEYSDEEA.

The stretch at 24–78 (VETLKNKLQALAEQHVDVLESLAPSVRKRVDVLMEIQSQHDELEVKFFEEKAALE) forms a coiled coil. Positions 45 to 60 (LAPSVRKRVDVLMEIQ) match the Nuclear export signal motif. The segment at 288–312 (EDYGASWVDDEEEDDNDDEYSDEEA) is disordered.

The protein belongs to the nucleosome assembly protein (NAP) family.

It localises to the nucleus. The protein localises to the cytoplasm. Functionally, may modulate chromatin structure by regulation of nucleosome assembly/disassembly. In Oryza sativa subsp. indica (Rice), this protein is Nucleosome assembly protein 1-like 4.